The chain runs to 180 residues: Methionine-R-sulfoxide reductase B2, mitochondrial (180 aa).

A mitochondrion-targeting transit peptide spans 1–41 (MSRFLVRLSTVVSKGATGKSVLPQKRIFAGIRLISSSTGLQ). A MsrB domain is found at 49 to 178 (STDWQRKLSP…NSVALNFKPR (130 aa)). 4 residues coordinate Zn(2+): Cys88, Cys91, Cys144, and Cys147. Cys167 serves as the catalytic Nucleophile.

The protein belongs to the MsrB Met sulfoxide reductase family. Zn(2+) is required as a cofactor.

The protein resides in the mitochondrion. It carries out the reaction L-methionyl-[protein] + [thioredoxin]-disulfide + H2O = L-methionyl-(R)-S-oxide-[protein] + [thioredoxin]-dithiol. The enzyme catalyses [thioredoxin]-disulfide + L-methionine + H2O = L-methionine (R)-S-oxide + [thioredoxin]-dithiol. Functionally, methionine-sulfoxide reductase that specifically reduces methionine (R)-sulfoxide back to methionine. While in many cases, methionine oxidation is the result of random oxidation following oxidative stress, methionine oxidation is also a post-translational modification that takes place on specific residue. Upon oxidative stress, may play a role in the preservation of mitochondrial integrity by decreasing the intracellular reactive oxygen species build-up through its scavenging role, hence contributing to cell survival and protein maintenance. The polypeptide is Methionine-R-sulfoxide reductase B2, mitochondrial (msrb2) (Danio rerio (Zebrafish)).